A 187-amino-acid chain; its full sequence is Elongation factor P (187 aa).

This sequence belongs to the elongation factor P family.

The protein localises to the cytoplasm. Its pathway is protein biosynthesis; polypeptide chain elongation. In terms of biological role, involved in peptide bond synthesis. Stimulates efficient translation and peptide-bond synthesis on native or reconstituted 70S ribosomes in vitro. Probably functions indirectly by altering the affinity of the ribosome for aminoacyl-tRNA, thus increasing their reactivity as acceptors for peptidyl transferase. The protein is Elongation factor P of Ruegeria sp. (strain TM1040) (Silicibacter sp.).